Reading from the N-terminus, the 415-residue chain is Carboxypeptidase B (415 aa).

The signal sequence occupies residues 1 to 13 (MLLLLALVSVALA). Positions 14–108 (HASEEHFDGN…LESQFDSHTR (95 aa)) are cleaved as a propeptide — activation peptide. The 295-residue stretch at 116-410 (KYNKWETIEA…LAVKYIANYV (295 aa)) folds into the Peptidase M14 domain. Residues Cys-171 and Cys-184 are joined by a disulfide bond. Zn(2+) is bound by residues His-174 and Glu-177. Substrate-binding positions include 174-177 (HARE), Arg-232, and 249-250 (NR). 2 disulfide bridges follow: Cys-243–Cys-266 and Cys-257–Cys-271. His-302 contributes to the Zn(2+) binding site. Residues 303–304 (SY) and Tyr-354 each bind substrate. Glu-376 (proton donor/acceptor) is an active-site residue.

The protein belongs to the peptidase M14 family. Requires Zn(2+) as cofactor.

It localises to the secreted. It is found in the zymogen granule lumen. It catalyses the reaction Preferential release of a C-terminal lysine or arginine amino acid.. The protein is Carboxypeptidase B (Cpb1) of Rattus norvegicus (Rat).